The following is a 379-amino-acid chain: MFLLDPFSGISGDMFLSAMIDFVDKEDFINTIKKVIDVEIEIKKVKKCHILANKVNIIPKCINCNANTYKDIKNVIKSSDIQEDIKITALEILKILAEAESKVHNVDVENVHFHEVGNYDTIADIVGAAYIINKLNLKNNCLYKPINVGNGFVRTEHGLLPVPAPATAEILKGLKIFFSDINEELTTPTGSAIIKYINPKLAKGAFIIKEVSYGAGDKDLNLLNALRVFRVEDIKREDIVLLETNVDDISAEILGYLYEVLDGKVRDLHFIPTYMKKNRPAYTIRAIVDRDIAEEVAKIIMRETGSLGVRIFDIERITADREFKTIKLFDESVRLKVGRVNDEIISQKPEFEDLKNIAKKYGIPLKDLYKLINISQIKN.

This sequence belongs to the LarC family.

The protein is Putative nickel insertion protein of Methanocaldococcus jannaschii (strain ATCC 43067 / DSM 2661 / JAL-1 / JCM 10045 / NBRC 100440) (Methanococcus jannaschii).